A 214-amino-acid chain; its full sequence is Octanoyltransferase (214 aa).

The 176-residue stretch at 32 to 207 (EDTLDEIWLV…NLLALLNHPP (176 aa)) folds into the BPL/LPL catalytic domain. Residues 71-78 (RGGQVTYH), 138-140 (SLG), and 151-153 (GLA) contribute to the substrate site. The Acyl-thioester intermediate role is filled by cysteine 169.

This sequence belongs to the LipB family.

The protein localises to the cytoplasm. It carries out the reaction octanoyl-[ACP] + L-lysyl-[protein] = N(6)-octanoyl-L-lysyl-[protein] + holo-[ACP] + H(+). Its pathway is protein modification; protein lipoylation via endogenous pathway; protein N(6)-(lipoyl)lysine from octanoyl-[acyl-carrier-protein]: step 1/2. In terms of biological role, catalyzes the transfer of endogenously produced octanoic acid from octanoyl-acyl-carrier-protein onto the lipoyl domains of lipoate-dependent enzymes. Lipoyl-ACP can also act as a substrate although octanoyl-ACP is likely to be the physiological substrate. In Klebsiella pneumoniae (strain 342), this protein is Octanoyltransferase.